The chain runs to 355 residues: Class E basic helix-loop-helix protein 22 (355 aa).

2 disordered regions span residues 34–90 (AFRS…GGGG) and 128–215 (GRGS…KEQK). Composition is skewed to gly residues over residues 81-90 (GGGGASGGGG) and 185-207 (GGSG…GGGS). Positions 216–270 (ALRLNINARERRRMHDLNDALDELRAVIPYAHSPSVRKLSKIATLLLAKNYILMQ) constitute a bHLH domain.

In terms of assembly, interacts with PRDM8. As to expression, brain-specific, with the highest expression in the cerebellum.

It localises to the nucleus. Its function is as follows. Inhibits DNA binding of TCF3/E47 homodimers and TCF3 (E47)/NEUROD1 heterodimers and acts as a strong repressor of Neurod1 and Myod-responsive genes, probably by heterodimerization with class a basic helix-loop-helix factors. Despite the presence of an intact basic domain, does not bind to DNA. In the brain, may function as an area-specific transcription factor that regulates the postmitotic acquisition of area identities and elucidate the genetic hierarchy between progenitors and postmitotic neurons driving neocortical arealization. May be required for the survival of a specific population of inhibitory neurons in the superficial laminae of the spinal cord dorsal horn that may regulate pruritis. Seems to play a crucial role in the retinogenesis, in the specification of amacrine and bipolar subtypes. Forms with PRDM8 a transcriptional repressor complex controlling genes involved in neural development and neuronal differentiation. The polypeptide is Class E basic helix-loop-helix protein 22 (Bhlhe22) (Mus musculus (Mouse)).